A 466-amino-acid polypeptide reads, in one-letter code: Protein tilB homolog (466 aa).

LRR repeat units lie at residues 22–43, 45–66, 67–88, and 89–110; these read SLEE…DKWC, DLKI…SKLK, KLEY…EGCE, and ELAK…KTLK. Residues 123-161 form the LRRCT domain; it reads NPCAFFDHYREFVVATLPQLKWLDGKGIEPSERIKALQE. The stretch at 178–204 forms a coiled coil; it reads LKRAKLKEEAQRKHQEEDKNEDKRSNA. Basic and acidic residues-rich tracts occupy residues 185-202 and 269-279; these read EEAQ…DKRS and EKQRKNQEKLS. Disordered stretches follow at residues 185–206 and 269–288; these read EEAQ…NAGF and EKQR…VKPP. A CS domain is found at 301 to 396; that stretch reads VNEPKIDFSL…GGQRAFTSVK (96 aa). The tract at residues 418–466 is disordered; the sequence is VDPSKHSFPDVTNIVQGKKHTPRRRPEPKIIPSEEDPTFEDNPEVPPLI. A compositionally biased stretch (acidic residues) spans 450–460; sequence SEEDPTFEDNP.

This sequence belongs to the tilB family. Interacts (via CS domain) with ZMYND10 (via C-terminus).

It localises to the cytoplasm. It is found in the cell projection. The protein localises to the cilium. In terms of biological role, may play a role in dynein arm assembly, hence essential for proper axoneme building for cilia motility. The protein is Protein tilB homolog (LRCC6) of Macaca fascicularis (Crab-eating macaque).